The following is a 126-amino-acid chain: Large ribosomal subunit protein bL19 (126 aa).

It belongs to the bacterial ribosomal protein bL19 family.

This protein is located at the 30S-50S ribosomal subunit interface and may play a role in the structure and function of the aminoacyl-tRNA binding site. This chain is Large ribosomal subunit protein bL19, found in Bradyrhizobium diazoefficiens (strain JCM 10833 / BCRC 13528 / IAM 13628 / NBRC 14792 / USDA 110).